Reading from the N-terminus, the 324-residue chain is Phospho-N-acetylmuramoyl-pentapeptide-transferase (324 aa).

10 helical membrane-spanning segments follow: residues Val5 to Ile25, Gly50 to Met70, Leu77 to Leu97, Leu117 to Ser137, Leu147 to Ser167, Leu176 to Trp196, Val203 to His223, Val227 to Leu247, Leu250 to Leu270, and Val302 to Val322.

Belongs to the glycosyltransferase 4 family. MraY subfamily. It depends on Mg(2+) as a cofactor.

The protein resides in the cell membrane. The enzyme catalyses UDP-N-acetyl-alpha-D-muramoyl-L-alanyl-gamma-D-glutamyl-meso-2,6-diaminopimeloyl-D-alanyl-D-alanine + di-trans,octa-cis-undecaprenyl phosphate = di-trans,octa-cis-undecaprenyl diphospho-N-acetyl-alpha-D-muramoyl-L-alanyl-D-glutamyl-meso-2,6-diaminopimeloyl-D-alanyl-D-alanine + UMP. It participates in cell wall biogenesis; peptidoglycan biosynthesis. Functionally, catalyzes the initial step of the lipid cycle reactions in the biosynthesis of the cell wall peptidoglycan: transfers peptidoglycan precursor phospho-MurNAc-pentapeptide from UDP-MurNAc-pentapeptide onto the lipid carrier undecaprenyl phosphate, yielding undecaprenyl-pyrophosphoryl-MurNAc-pentapeptide, known as lipid I. The sequence is that of Phospho-N-acetylmuramoyl-pentapeptide-transferase from Bacillus velezensis (strain DSM 23117 / BGSC 10A6 / LMG 26770 / FZB42) (Bacillus amyloliquefaciens subsp. plantarum).